The primary structure comprises 898 residues: Interleukin enhancer-binding factor 3-B (898 aa).

A DZF domain is found at 5 to 379 (RIFLNDDRHV…ALKRPIEEDG (375 aa)). Disordered stretches follow at residues 52-87 (QEKDSGIEQENPEPEETETTEEGKDSEAKTGENPTR), 374-403 (PIEEDGEDKSPSKKKKKIQKKDEKSEPPQA), 468-529 (LPTG…VMEL), 627-651 (PPPQVMRGRGRGGMNRGRGRGRGGF), and 711-799 (GEGY…QGAA). Positions 61-71 (ENPEPEETETT) are enriched in acidic residues. 2 stretches are compositionally biased toward basic and acidic residues: residues 72–81 (EEGKDSEAKT) and 374–384 (PIEEDGEDKSP). The short motif at 372–390 (KRPIEEDGEDKSPSKKKKK) is the Bipartite nuclear localization signal element. A DRBM 1 domain is found at 399–468 (EPPQAMNALM…AVKVLQDMGL (70 aa)). Acidic residues predominate over residues 474–483 (EKEESVDESE). The segment covering 489–513 (QTPSQTADSEQADSSAGDQSESGKQ) has biased composition (polar residues). The region spanning 521 to 587 (HGKNPVMELN…ALSALEKLFP (67 aa)) is the DRBM 2 domain. Positions 637–651 (RGGMNRGRGRGRGGF) are enriched in gly residues. The segment covering 717-747 (PTPPKPFVKKPPPPQQQQQPPPQHASNPPKP) has biased composition (pro residues). The span at 749-782 (YNQGYQGHQGGQQQQQPQQQQQQTYNQNQYSNYG) shows a compositional bias: low complexity.

A component of a ybx2/frgy2-containing mRNA-ribonucleoprotein (mRNP) complex. Also a component of the CCAAT box transcription factor (CBTF) complex. Post-translationally, phosphorylated. Phosphorylation affects nuclear translocation. In terms of processing, methylated by protein arginine N-methyltransferase 1 (prmt1b) in the RGG-rich domain. Methylation decreases DNA-binding and thereby decreases transcription of the gata2 gene, but does not regulate dsRNA binding or subcellular localization.

It is found in the nucleus. It localises to the cytoplasm. In terms of biological role, RNA-binding protein that plays an essential role in the biogenesis of circular RNAs (circRNAs) which are produced by back-splicing circularization of pre-mRNAs. Within the nucleus, promotes circRNAs processing by stabilizing the regulatory elements residing in the flanking introns of the circularized exons. Plays thereby a role in the back-splicing of a subset of circRNAs. As a consequence, participates in a wide range of transcriptional and post-transcriptional processes. Binds to poly-U elements and AU-rich elements (AREs) in the 3'-UTR of target mRNAs. Upon viral infection, ILF3 accumulates in the cytoplasm and participates in the innate antiviral response. Mechanistically, ILF3 becomes phosphorylated and activated by the double-stranded RNA-activated protein kinase/PKR which releases ILF3 from cellular mature circRNAs. In turn, unbound ILF3 molecules are able to interact with and thus inhibit viral mRNAs. Has a cytoplasmic role early in development as part of a ribonucleoprotein (mRNP) complex which may regulate mRNA transport and/or translation. Following nuclear localization at the mid-blastula transition, acts as a transcription factor and binds the 5'-CCAAT-3' promoter sequence to regulate transcription of the gata2 gene as a subunit of the CCAAT box transcription factor (CBTF). Its role as an mRNP component negatively regulates its activity as a transcription factor by precluding its nuclear localization. This chain is Interleukin enhancer-binding factor 3-B (ilf3-b), found in Xenopus laevis (African clawed frog).